The following is a 1035-amino-acid chain: Sialidase A (1035 aa).

An N-terminal signal peptide occupies residues 1–53 (MSYFRNRDIDIERNSMNRSVQERKCRYSIRKLSVGAVSMIVGAVVFGTSPVLA). The segment at 57 to 112 (ASEQPLANETQLSGESSTLTDTEKSQPSSETELSGNKQEQERKDKQEEKIPRDYYA) is disordered. A compositionally biased stretch (polar residues) spans 61–92 (PLANETQLSGESSTLTDTEKSQPSSETELSGN). Residues 94–112 (QEQERKDKQEEKIPRDYYA) are compositionally biased toward basic and acidic residues. R347 contacts substrate. The Proton acceptor role is filled by D372. BNR repeat units lie at residues 381–392 (RRSEDNGKTWGD), 539–550 (SYSDDDGKTWSA), and 607–618 (IYSDDHGKTWHA). E647 is a catalytic residue. R663 provides a ligand contact to substrate. The BNR 4 repeat unit spans residues 672–683 (ATSKDGGVTWEK). The tract at residues 902-951 (GPLGTSGEEPAPTVEKPEYTGPLGTSGEEPAPTVEKPEYTGPLGTAGEEA) is disordered. The LPXTG sorting signal motif lies at 1003-1007 (LPETG). T1006 carries the post-translational modification Pentaglycyl murein peptidoglycan amidated threonine. Positions 1007–1035 (GNKESDLLASLGLTAFFLGLFTLGKKREQ) are cleaved as a propeptide — removed by sortase.

The protein belongs to the glycosyl hydrolase 33 family.

It is found in the secreted. The protein resides in the cell wall. The enzyme catalyses Hydrolysis of alpha-(2-&gt;3)-, alpha-(2-&gt;6)-, alpha-(2-&gt;8)- glycosidic linkages of terminal sialic acid residues in oligosaccharides, glycoproteins, glycolipids, colominic acid and synthetic substrates.. This is Sialidase A (nanA) from Streptococcus pneumoniae.